An 860-amino-acid chain; its full sequence is Leucine--tRNA ligase (860 aa).

The short motif at 42-52 is the 'HIGH' region element; that stretch reads PYPSGRLHMGH. Residues 619-623 carry the 'KMSKS' region motif; that stretch reads KMSKS. Lys-622 serves as a coordination point for ATP.

It belongs to the class-I aminoacyl-tRNA synthetase family.

Its subcellular location is the cytoplasm. It carries out the reaction tRNA(Leu) + L-leucine + ATP = L-leucyl-tRNA(Leu) + AMP + diphosphate. The chain is Leucine--tRNA ligase from Escherichia coli O45:K1 (strain S88 / ExPEC).